Consider the following 1087-residue polypeptide: 2'-5'-oligoadenylate synthase 3 (1087 aa).

M1 is subject to N-acetylmethionine. Residues 6–343 (TPAAALDRFV…GDPVQSWKGP (338 aa)) form an OAS domain 1 region. Interaction with dsRNA stretches follow at residues 12 to 57 (DRFV…VLKT) and 186 to 200 (ELRRNFVNIRPAKLK). The tract at residues 344–410 (GLPRAGCSGL…VPGMALDLSQ (67 aa)) is linker. Residue T365 is modified to Phosphothreonine. OAS domain stretches follow at residues 411 to 742 (IPTK…PWDV) and 750 to 1084 (TPAG…WPVK). S804 contacts ATP. D816, D818, and D888 together coordinate Mg(2+). ATP is bound by residues R947, K950, and Q969.

The protein belongs to the 2-5A synthase family. As to quaternary structure, monomer. Requires Mg(2+) as cofactor. As to expression, present at high level in placenta trophoblast.

Its subcellular location is the cytoplasm. It localises to the nucleus. It carries out the reaction 3 ATP = 5'-triphosphoadenylyl-(2'-&gt;5')-adenylyl-(2'-&gt;5')-adenosine + 2 diphosphate. Its activity is regulated as follows. Produced as a latent enzyme which is activated by dsRNA generated during the course of viral infection. Strongly activated by long dsRNAs at least 50 nucleotides in length. ssRNA does not activate the enzyme. Interferon-induced, dsRNA-activated antiviral enzyme which plays a critical role in cellular innate antiviral response. In addition, it may also play a role in other cellular processes such as apoptosis, cell growth, differentiation and gene regulation. Synthesizes preferentially dimers of 2'-5'-oligoadenylates (2-5A) from ATP which then bind to the inactive monomeric form of ribonuclease L (RNase L) leading to its dimerization and subsequent activation. Activation of RNase L leads to degradation of cellular as well as viral RNA, resulting in the inhibition of protein synthesis, thus terminating viral replication. Can mediate the antiviral effect via the classical RNase L-dependent pathway or an alternative antiviral pathway independent of RNase L. Displays antiviral activity against Chikungunya virus (CHIKV), Dengue virus, Sindbis virus (SINV) and Semliki forest virus (SFV). This is 2'-5'-oligoadenylate synthase 3 (OAS3) from Homo sapiens (Human).